The primary structure comprises 165 residues: Cyanate hydratase (165 aa).

Catalysis depends on residues R106, E109, and S132.

The protein belongs to the cyanase family.

It carries out the reaction cyanate + hydrogencarbonate + 3 H(+) = NH4(+) + 2 CO2. Catalyzes the reaction of cyanate with bicarbonate to produce ammonia and carbon dioxide. The chain is Cyanate hydratase from Laccaria bicolor (strain S238N-H82 / ATCC MYA-4686) (Bicoloured deceiver).